The primary structure comprises 282 residues: MSQIDDLPPLREVIRKYDLFARKSLGQNFLFDLNLTARIARAAGPLDDVTVIEIGPGPGGLTRALLATGAKRVIAVERDERAIPALEEIARRYPGRLEIIHGDATTFDPTPLLQGERARIVANLPYNIATLLLTGWLSVEPWPPWFDMMVLMFQREVAERIVATENDEAYGRLGVLANWRAETKILFDIAPGAFVPPPKVMSSVVRLAPRAAPLACSRRALEQVTAAAFNQRRKMLRQSLKALGVDPAALAEAAGVDPTRRAETVSIAGFVAMANRLIELKA.

S-adenosyl-L-methionine contacts are provided by asparagine 28, leucine 30, glycine 55, glutamate 77, aspartate 103, and asparagine 123.

Belongs to the class I-like SAM-binding methyltransferase superfamily. rRNA adenine N(6)-methyltransferase family. RsmA subfamily.

Its subcellular location is the cytoplasm. It carries out the reaction adenosine(1518)/adenosine(1519) in 16S rRNA + 4 S-adenosyl-L-methionine = N(6)-dimethyladenosine(1518)/N(6)-dimethyladenosine(1519) in 16S rRNA + 4 S-adenosyl-L-homocysteine + 4 H(+). Its function is as follows. Specifically dimethylates two adjacent adenosines (A1518 and A1519) in the loop of a conserved hairpin near the 3'-end of 16S rRNA in the 30S particle. May play a critical role in biogenesis of 30S subunits. The polypeptide is Ribosomal RNA small subunit methyltransferase A (Afipia carboxidovorans (strain ATCC 49405 / DSM 1227 / KCTC 32145 / OM5) (Oligotropha carboxidovorans)).